A 353-amino-acid polypeptide reads, in one-letter code: MKLSKTFLFITALCCATPTLAIQNSTSSSGEQKMAMENTQNIREIYLAGGCFWGMEAYMERIHGVKDAISGYANGNTEKTSYQMIGLTDHAETVKVTYDANQISLDKLLKYYFKVIDPTSVNKQGNDRGRQYRTGIYYQDGADKAVIGQALAQLQTKYKKPVQIEVQPLKNYIVAEEYHQDYLKKNPNGYCHIDITKADEPVIDEKDYPKPSDAELKAKLTPLQYSVTQNKHTERSFSNEYWDNFQPGIYVDITTGEPVFSSNDKFESGCGWPSFTKPIIKDVVHYETDNSFNMQRTEVLSRAGNAHLGHVFDDGPKDKGGLRYCINSASIKFIPLAEMEKAGYGYLIQSIKK.

The interval 43-196 (REIYLAGGCF…PNGYCHIDIT (154 aa)) is peptide methionine sulfoxide reductase A. C51 is a catalytic residue. One can recognise a MsrB domain in the interval 213 to 336 (DAELKAKLTP…NSASIKFIPL (124 aa)). The active-site Nucleophile is C325.

This sequence in the N-terminal section; belongs to the MsrA Met sulfoxide reductase family. In the C-terminal section; belongs to the MsrB Met sulfoxide reductase family.

The enzyme catalyses L-methionyl-[protein] + [thioredoxin]-disulfide + H2O = L-methionyl-(S)-S-oxide-[protein] + [thioredoxin]-dithiol. The catalysed reaction is [thioredoxin]-disulfide + L-methionine + H2O = L-methionine (S)-S-oxide + [thioredoxin]-dithiol. It carries out the reaction L-methionyl-[protein] + [thioredoxin]-disulfide + H2O = L-methionyl-(R)-S-oxide-[protein] + [thioredoxin]-dithiol. Its function is as follows. Has an important function as a repair enzyme for proteins that have been inactivated by oxidation. Catalyzes the reversible oxidation-reduction of methionine sulfoxide in proteins to methionine. In Haemophilus influenzae (strain ATCC 51907 / DSM 11121 / KW20 / Rd), this protein is Peptide methionine sulfoxide reductase MsrA/MsrB (msrAB).